Consider the following 177-residue polypeptide: Large ribosomal subunit protein uL6 (177 aa).

Belongs to the universal ribosomal protein uL6 family. As to quaternary structure, part of the 50S ribosomal subunit.

In terms of biological role, this protein binds to the 23S rRNA, and is important in its secondary structure. It is located near the subunit interface in the base of the L7/L12 stalk, and near the tRNA binding site of the peptidyltransferase center. In Chelativorans sp. (strain BNC1), this protein is Large ribosomal subunit protein uL6.